The chain runs to 201 residues: Guanylate kinase (201 aa).

One can recognise a Guanylate kinase-like domain in the interval 2–180 (SCLFVISAPS…AARDVASIVQ (179 aa)). 9 to 16 (APSGAGKT) provides a ligand contact to ATP.

The protein belongs to the guanylate kinase family.

It localises to the cytoplasm. It carries out the reaction GMP + ATP = GDP + ADP. Its function is as follows. Essential for recycling GMP and indirectly, cGMP. The polypeptide is Guanylate kinase (Nitrosomonas europaea (strain ATCC 19718 / CIP 103999 / KCTC 2705 / NBRC 14298)).